Consider the following 149-residue polypeptide: Large ribosomal subunit protein bL9 (149 aa).

The protein belongs to the bacterial ribosomal protein bL9 family.

Its function is as follows. Binds to the 23S rRNA. This chain is Large ribosomal subunit protein bL9, found in Mycoplasma pneumoniae (strain ATCC 29342 / M129 / Subtype 1) (Mycoplasmoides pneumoniae).